Here is a 473-residue protein sequence, read N- to C-terminus: Cysteine--tRNA ligase (473 aa).

Position 27 (Cys27) interacts with Zn(2+). The 'HIGH' region signature appears at 29–39 (ITPYDHMHVGH). Cys213, His238, and Glu242 together coordinate Zn(2+). A 'KMSKS' region motif is present at residues 271–275 (KMSKS). Residue Lys274 coordinates ATP.

This sequence belongs to the class-I aminoacyl-tRNA synthetase family. It depends on Zn(2+) as a cofactor.

It localises to the cytoplasm. The enzyme catalyses tRNA(Cys) + L-cysteine + ATP = L-cysteinyl-tRNA(Cys) + AMP + diphosphate. The sequence is that of Cysteine--tRNA ligase from Pyrobaculum islandicum (strain DSM 4184 / JCM 9189 / GEO3).